A 340-amino-acid polypeptide reads, in one-letter code: Heat-inducible transcription repressor HrcA (340 aa).

The protein belongs to the HrcA family.

Negative regulator of class I heat shock genes (grpE-dnaK-dnaJ and groELS operons). Prevents heat-shock induction of these operons. This Burkholderia cenocepacia (strain ATCC BAA-245 / DSM 16553 / LMG 16656 / NCTC 13227 / J2315 / CF5610) (Burkholderia cepacia (strain J2315)) protein is Heat-inducible transcription repressor HrcA.